Consider the following 446-residue polypeptide: Glycine--tRNA ligase (446 aa).

Positions 100 and 158 each coordinate substrate. Residues 190 to 192 (RNE), 200 to 205 (FRTREF), 275 to 276 (EL), and 319 to 322 (GIER) contribute to the ATP site. 205 to 209 (FEQFE) contributes to the substrate binding site. 315-319 (EPAVG) serves as a coordination point for substrate.

The protein belongs to the class-II aminoacyl-tRNA synthetase family. As to quaternary structure, homodimer.

The protein localises to the cytoplasm. It catalyses the reaction tRNA(Gly) + glycine + ATP = glycyl-tRNA(Gly) + AMP + diphosphate. Functionally, catalyzes the attachment of glycine to tRNA(Gly). The sequence is that of Glycine--tRNA ligase from Mycoplasma genitalium (strain ATCC 33530 / DSM 19775 / NCTC 10195 / G37) (Mycoplasmoides genitalium).